Reading from the N-terminus, the 155-residue chain is Small ribosomal subunit protein uS7cz/uS7cy (155 aa).

The protein belongs to the universal ribosomal protein uS7 family. As to quaternary structure, part of the 30S ribosomal subunit.

It localises to the plastid. It is found in the chloroplast. Its function is as follows. One of the primary rRNA binding proteins, it binds directly to 16S rRNA where it nucleates assembly of the head domain of the 30S subunit. In Guizotia abyssinica (Niger), this protein is Small ribosomal subunit protein uS7cz/uS7cy (rps7-A).